Here is a 290-residue protein sequence, read N- to C-terminus: MWTPPRNDQHYLNWQWYSSILSSHAAMCGCPDAVAHFNHLASVLRAPQNPPPPGPQRNLPLRRLPALPAAPEAPGDRAPWPMAGGAEGEDGGAGGDADHGGAAGGPEDADLLDAVAAAETRPQETQEGHRGVPLQPRRGAKRKLTFPPSQAPQTSPPVGRLAAGGKRVAKLRGRDTDRLPAAQAAAAATANPGSQTQTPLQPSPKNPTKSRYQPYLVTKGGGSSILISNSTINMFGDPKPYNPSSNDWKEEYEACRIWDRPPRGNLRDTPYYPWAPKENQYRVNFKLGFQ.

The tract at residues 67-210 (LPAAPEAPGD…QPSPKNPTKS (144 aa)) is disordered. Basic and acidic residues predominate over residues 121 to 130 (RPQETQEGHR). Low complexity predominate over residues 181–190 (AAQAAAAATA). Over residues 191–200 (NPGSQTQTPL) the composition is skewed to polar residues.

This is an uncharacterized protein from Homo sapiens (Human).